A 134-amino-acid chain; its full sequence is uncharacterized protein (134 aa).

The 104-residue stretch at 4–107 (IFTKIINREL…PTHSLSNFSF (104 aa)) folds into the HIT domain. The short motif at 91-95 (HLHIH) is the Histidine triad motif element.

This is an uncharacterized protein from Mycobacterium leprae (strain TN).